The chain runs to 153 residues: Endoribonuclease YbeY (153 aa).

Zn(2+) is bound by residues H116, H120, and H126.

The protein belongs to the endoribonuclease YbeY family. The cofactor is Zn(2+).

It localises to the cytoplasm. Its function is as follows. Single strand-specific metallo-endoribonuclease involved in late-stage 70S ribosome quality control and in maturation of the 3' terminus of the 16S rRNA. The sequence is that of Endoribonuclease YbeY from Paraburkholderia phytofirmans (strain DSM 17436 / LMG 22146 / PsJN) (Burkholderia phytofirmans).